We begin with the raw amino-acid sequence, 235 residues long: Large ribosomal subunit protein uL4 (235 aa).

Residues 45 to 75 are disordered; sequence RAGTASTKTRGEVSGGGRKPWPQKHTGRARH. A compositionally biased stretch (basic residues) spans 65 to 75; the sequence is WPQKHTGRARH.

It belongs to the universal ribosomal protein uL4 family. As to quaternary structure, part of the 50S ribosomal subunit.

In terms of biological role, one of the primary rRNA binding proteins, this protein initially binds near the 5'-end of the 23S rRNA. It is important during the early stages of 50S assembly. It makes multiple contacts with different domains of the 23S rRNA in the assembled 50S subunit and ribosome. This protein only weakly controls expression of the E.coli S10 operon. It is incorporated into E.coli ribosomes, however it is not as firmly associated as the endogenous protein. Its function is as follows. Forms part of the polypeptide exit tunnel. In Thermotoga maritima (strain ATCC 43589 / DSM 3109 / JCM 10099 / NBRC 100826 / MSB8), this protein is Large ribosomal subunit protein uL4 (rplD).